A 141-amino-acid polypeptide reads, in one-letter code: HTH-type transcriptional repressor NsrR (141 aa).

Positions 2–129 (QLTSFTDYGL…DNYTLADMVK (128 aa)) constitute an HTH rrf2-type domain. The H-T-H motif DNA-binding region spans 28-51 (ISQVTEVYGVSRNHMVKIINQLSR). 3 residues coordinate [2Fe-2S] cluster: cysteine 91, cysteine 96, and cysteine 102.

[2Fe-2S] cluster is required as a cofactor.

Nitric oxide-sensitive repressor of genes involved in protecting the cell against nitrosative stress. May require iron for activity. The polypeptide is HTH-type transcriptional repressor NsrR (Yersinia pseudotuberculosis serotype O:1b (strain IP 31758)).